The sequence spans 150 residues: FAD synthase (150 aa).

ATP-binding positions include 8–9 (AF), 13–16 (HPGH), aspartate 95, and histidine 122.

It belongs to the archaeal FAD synthase family. In terms of assembly, homodimer. It depends on a divalent metal cation as a cofactor.

It catalyses the reaction FMN + ATP + H(+) = FAD + diphosphate. The protein operates within cofactor biosynthesis; FAD biosynthesis; FAD from FMN: step 1/1. Catalyzes the transfer of the AMP portion of ATP to flavin mononucleotide (FMN) to produce flavin adenine dinucleotide (FAD) coenzyme. This chain is FAD synthase, found in Methanobrevibacter ruminantium (strain ATCC 35063 / DSM 1093 / JCM 13430 / OCM 146 / M1) (Methanobacterium ruminantium).